A 212-amino-acid polypeptide reads, in one-letter code: Pyridoxine/pyridoxamine 5'-phosphate oxidase (212 aa).

Residues 61 to 66 (RTVLLK), 76 to 77 (FT), lysine 82, lysine 83, and glutamine 105 each bind FMN. Lysine 66 is a substrate binding site. 3 residues coordinate substrate: tyrosine 123, arginine 127, and serine 131. Residues 140–141 (QS) and tryptophan 185 each bind FMN. A substrate-binding site is contributed by 191–193 (RLH). Arginine 195 lines the FMN pocket.

This sequence belongs to the pyridoxamine 5'-phosphate oxidase family. In terms of assembly, homodimer. FMN serves as cofactor.

It carries out the reaction pyridoxamine 5'-phosphate + O2 + H2O = pyridoxal 5'-phosphate + H2O2 + NH4(+). The enzyme catalyses pyridoxine 5'-phosphate + O2 = pyridoxal 5'-phosphate + H2O2. Its pathway is cofactor metabolism; pyridoxal 5'-phosphate salvage; pyridoxal 5'-phosphate from pyridoxamine 5'-phosphate: step 1/1. The protein operates within cofactor metabolism; pyridoxal 5'-phosphate salvage; pyridoxal 5'-phosphate from pyridoxine 5'-phosphate: step 1/1. In terms of biological role, catalyzes the oxidation of either pyridoxine 5'-phosphate (PNP) or pyridoxamine 5'-phosphate (PMP) into pyridoxal 5'-phosphate (PLP). This Vesicomyosocius okutanii subsp. Calyptogena okutanii (strain HA) protein is Pyridoxine/pyridoxamine 5'-phosphate oxidase.